An 853-amino-acid polypeptide reads, in one-letter code: Neural cell adhesion molecule 1 (853 aa).

Positions 1–19 are cleaved as a signal peptide; sequence MLQTKNLIWTLFFLGTAVS. 5 Ig-like C2-type domains span residues 20 to 111, 116 to 205, 212 to 300, 307 to 412, and 415 to 500; these read LQVD…ATVN, QKLM…KDIQ, PTVQ…ASIH, PKIT…LEVQ, and PKLQ…ESLE. The Extracellular portion of the chain corresponds to 20–719; that stretch reads LQVDIVPSQG…NGSPTSGLST (700 aa). Cystine bridges form between cysteine 41/cysteine 96 and cysteine 139/cysteine 189. Heparin-binding positions include 152-156 and 161-165; these read KHKGR and KKDVR. A glycan (N-linked (GlcNAc...) asparagine) is linked at asparagine 222. A disulfide bond links cysteine 235 and cysteine 286. N-linked (GlcNAc...) asparagine glycosylation is found at asparagine 314, asparagine 346, asparagine 432, asparagine 458, and asparagine 487. Cysteine 328 and cysteine 394 are joined by a disulfide. Cysteines 435 and 488 form a disulfide. 2 Fibronectin type-III domains span residues 508 to 607 and 609 to 704; these read TPSS…TQPV and EPSA…SAQP. The chain crosses the membrane as a helical span at residues 720 to 737; it reads GAIVGILVVTFVLLLVAV. Residues 738 to 853 are Cytoplasmic-facing; that stretch reads DVTCYFLNKC…TQIKVNESKA (116 aa). Residues 764–853 are disordered; it reads GAKGKDMEEG…TQIKVNESKA (90 aa). 2 stretches are compositionally biased toward basic and acidic residues: residues 766–807 and 815–829; these read KGKD…HTEP and EPEK…ETET. 2 positions are modified to phosphoserine: serine 778 and serine 782. The segment covering 838-853 has biased composition (polar residues); that stretch reads TVPNDATQIKVNESKA.

In terms of assembly, interacts with MDK. Found in a complex with SLC39A6, SLC39A10 and with NCAM1; this complex controls NCAM1 phosphorylation and integration into focal adhesion complexes during epithelial-tomesenchymal transition. Interacts with synaptic plasticity regulator PANTS. Post-translationally, polysialylated by ST8SIA2 and ST8SIA4. Polysialylation modulates cell interactions by confering both attractive and repulsive properties that are highly regulated by ST8SIA2 and ST8SIA4. Polysialylation is formed on a-2,3-linked sialic acid of core glycans.

It is found in the cell membrane. This protein is a cell adhesion molecule involved in neuron-neuron adhesion, neurite fasciculation, outgrowth of neurites, etc. This chain is Neural cell adhesion molecule 1, found in Bos taurus (Bovine).